The sequence spans 137 residues: uncharacterized protein (137 aa).

Residues 75–91 (MFLDAMVILAVASGVSL) form a helical membrane-spanning segment. A disordered region spans residues 93 to 116 (PQLPGRRSHNASTPGAKKPGKDHG).

It is found in the membrane. This is an uncharacterized protein from Saccharomyces cerevisiae (strain ATCC 204508 / S288c) (Baker's yeast).